We begin with the raw amino-acid sequence, 123 residues long: Large ribosomal subunit protein uL14 (123 aa).

This sequence belongs to the universal ribosomal protein uL14 family. As to quaternary structure, part of the 50S ribosomal subunit. Forms a cluster with proteins L3 and L19. In the 70S ribosome, L14 and L19 interact and together make contacts with the 16S rRNA in bridges B5 and B8.

In terms of biological role, binds to 23S rRNA. Forms part of two intersubunit bridges in the 70S ribosome. This chain is Large ribosomal subunit protein uL14, found in Proteus mirabilis (strain HI4320).